Reading from the N-terminus, the 366-residue chain is tRNA/tmRNA (uracil-C(5))-methyltransferase (366 aa).

The S-adenosyl-L-methionine site is built by glutamine 190, tyrosine 218, asparagine 223, glutamate 239, and aspartate 299. Cysteine 324 (nucleophile) is an active-site residue. The active-site Proton acceptor is glutamate 358.

It belongs to the class I-like SAM-binding methyltransferase superfamily. RNA M5U methyltransferase family. TrmA subfamily.

It carries out the reaction uridine(54) in tRNA + S-adenosyl-L-methionine = 5-methyluridine(54) in tRNA + S-adenosyl-L-homocysteine + H(+). The enzyme catalyses uridine(341) in tmRNA + S-adenosyl-L-methionine = 5-methyluridine(341) in tmRNA + S-adenosyl-L-homocysteine + H(+). Dual-specificity methyltransferase that catalyzes the formation of 5-methyluridine at position 54 (m5U54) in all tRNAs, and that of position 341 (m5U341) in tmRNA (transfer-mRNA). This is tRNA/tmRNA (uracil-C(5))-methyltransferase from Salmonella arizonae (strain ATCC BAA-731 / CDC346-86 / RSK2980).